A 1159-amino-acid chain; its full sequence is PAN2-PAN3 deadenylation complex catalytic subunit pan2 (1159 aa).

A WD repeat occupies 276–315; the sequence is ANVSFMLGIDISPSGEALAINDAECMVHLWGSPAKIHFNE. The linker stretch occupies residues 316-451; it reads MSKEVELADV…GAKLNGEAED (136 aa). In terms of domain architecture, USP spans 452–821; it reads DPLLKYSNVE…VPCVLAFQVK (370 aa). The 177-residue stretch at 872–1048 folds into the Exonuclease domain; that stretch reads LDTEFVDLEK…IEDARMALRL (177 aa). Residues D873, E875, D982, and D1041 each contribute to the a divalent metal cation site. The segment at 1094–1159 is disordered; that stretch reads TAVTMQNTNS…GDFFGGSPLK (66 aa). Positions 1096-1106 are enriched in polar residues; sequence VTMQNTNSGRN. Low complexity predominate over residues 1107–1128; it reads TPTVPDAAGAPAVPASAPTTPG. Residues 1143–1153 are compositionally biased toward gly residues; it reads TFSGPGAGDFF.

It belongs to the peptidase C19 family. PAN2 subfamily. In terms of assembly, forms a heterotrimer with an asymmetric homodimer of the regulatory subunit pan3 to form the poly(A)-nuclease (PAN) deadenylation complex. It depends on a divalent metal cation as a cofactor.

The protein resides in the cytoplasm. The enzyme catalyses Exonucleolytic cleavage of poly(A) to 5'-AMP.. Its activity is regulated as follows. Positively regulated by the regulatory subunit pan3. In terms of biological role, catalytic subunit of the poly(A)-nuclease (PAN) deadenylation complex, one of two cytoplasmic mRNA deadenylases involved in mRNA turnover. PAN specifically shortens poly(A) tails of RNA and the activity is stimulated by poly(A)-binding protein pab1. PAN deadenylation is followed by rapid degradation of the shortened mRNA tails by the CCR4-NOT complex. Deadenylated mRNAs are then degraded by two alternative mechanisms, namely exosome-mediated 3'-5' exonucleolytic degradation, or deadenylation-dependent mRNA decaping and subsequent 5'-3' exonucleolytic degradation by xrn1. May also be involved in post-transcriptional maturation of mRNA poly(A) tails. This Aspergillus terreus (strain NIH 2624 / FGSC A1156) protein is PAN2-PAN3 deadenylation complex catalytic subunit pan2.